Reading from the N-terminus, the 110-residue chain is Progonadoliberin-2 (110 aa).

A signal peptide spans 1-26 (MASIGQGLVLLLLLLLLTAQPGPLKA). A disordered region spans residues 25–85 (KAQHWSHGWY…KALAPPEDTV (61 aa)). At G36 the chain carries Glycine amide.

It belongs to the GnRH family. As to expression, midbrain.

It localises to the secreted. In terms of biological role, stimulates the secretion of gonadotropins; it stimulates the secretion of both luteinizing and follicle-stimulating hormones. This chain is Progonadoliberin-2 (GNRH2), found in Suncus murinus (Asian house shrew).